Consider the following 227-residue polypeptide: Ribose-5-phosphate isomerase A (227 aa).

Substrate-binding positions include 26 to 29, 82 to 85, and 95 to 98; these read TGST, DGAD, and KGGG. Residue Glu-104 is the Proton acceptor of the active site. Residue Lys-122 coordinates substrate.

This sequence belongs to the ribose 5-phosphate isomerase family. In terms of assembly, homodimer.

The enzyme catalyses aldehydo-D-ribose 5-phosphate = D-ribulose 5-phosphate. It functions in the pathway carbohydrate degradation; pentose phosphate pathway; D-ribose 5-phosphate from D-ribulose 5-phosphate (non-oxidative stage): step 1/1. Its function is as follows. Catalyzes the reversible conversion of ribose-5-phosphate to ribulose 5-phosphate. This is Ribose-5-phosphate isomerase A from Streptococcus pneumoniae serotype 4 (strain ATCC BAA-334 / TIGR4).